The chain runs to 342 residues: AA9 family lytic polysaccharide monooxygenase AA9-X282 (342 aa).

The signal sequence occupies residues methionine 1–alanine 18. Histidine 17 serves as a coordination point for Cu(2+). 2 positions are modified to phosphothreonine: threonine 19 and threonine 57. Serine 59 is modified (phosphoserine). Residues cysteine 63 and cysteine 181 are joined by a disulfide bond. Histidine 93 is a Cu(2+) binding site. O2 contacts are provided by histidine 167 and glutamine 176. Tyrosine 178 serves as a coordination point for Cu(2+). N-linked (GlcNAc...) asparagine glycosylation occurs at asparagine 189. The interval serine 233–proline 263 is X282 extension. Residues valine 281–proline 302 form a disordered region. Residues proline 285–proline 302 are compositionally biased toward pro residues. The CBM1 domain maps to proline 306 to leucine 342.

Belongs to the polysaccharide monooxygenase AA9 family. Cu(2+) is required as a cofactor.

The protein localises to the secreted. It carries out the reaction [(1-&gt;4)-beta-D-glucosyl]n+m + reduced acceptor + O2 = 4-dehydro-beta-D-glucosyl-[(1-&gt;4)-beta-D-glucosyl]n-1 + [(1-&gt;4)-beta-D-glucosyl]m + acceptor + H2O.. Its function is as follows. Lytic polysaccharide monooxygenase (LPMO) that depolymerizes crystalline and amorphous polysaccharides via the oxidation of scissile alpha- or beta-(1-4)-glycosidic bonds, yielding C1 oxidation products. Catalysis by LPMOs requires the reduction of the active-site copper from Cu(II) to Cu(I) by a reducing agent and H(2)O(2) or O(2) as a cosubstrate. Shows only weak binding properties to cellulose, and low cellulolytic oxidative activity which questions the involvement of X282 extension-containing AA9 proteins in the degradation of plant cell wall and opens new avenues as to the divergence of function of some AA9 members. This is AA9 family lytic polysaccharide monooxygenase AA9-X282 from Coprinopsis cinerea (strain Okayama-7 / 130 / ATCC MYA-4618 / FGSC 9003) (Inky cap fungus).